A 428-amino-acid chain; its full sequence is 3-phosphoshikimate 1-carboxyvinyltransferase (428 aa).

3-phosphoshikimate contacts are provided by Lys-20, Ser-21, and Arg-25. A phosphoenolpyruvate-binding site is contributed by Lys-20. The phosphoenolpyruvate site is built by Gly-92 and Arg-120. Residues Ser-166, Gln-168, Asp-314, and Lys-341 each coordinate 3-phosphoshikimate. Gln-168 contributes to the phosphoenolpyruvate binding site. The active-site Proton acceptor is Asp-314. The phosphoenolpyruvate site is built by Arg-345 and Arg-387.

This sequence belongs to the EPSP synthase family. As to quaternary structure, monomer.

The protein resides in the cytoplasm. It catalyses the reaction 3-phosphoshikimate + phosphoenolpyruvate = 5-O-(1-carboxyvinyl)-3-phosphoshikimate + phosphate. It functions in the pathway metabolic intermediate biosynthesis; chorismate biosynthesis; chorismate from D-erythrose 4-phosphate and phosphoenolpyruvate: step 6/7. Functionally, catalyzes the transfer of the enolpyruvyl moiety of phosphoenolpyruvate (PEP) to the 5-hydroxyl of shikimate-3-phosphate (S3P) to produce enolpyruvyl shikimate-3-phosphate and inorganic phosphate. This Listeria welshimeri serovar 6b (strain ATCC 35897 / DSM 20650 / CCUG 15529 / CIP 8149 / NCTC 11857 / SLCC 5334 / V8) protein is 3-phosphoshikimate 1-carboxyvinyltransferase.